A 185-amino-acid polypeptide reads, in one-letter code: Nucleoside triphosphate pyrophosphatase (185 aa).

Catalysis depends on aspartate 70, which acts as the Proton acceptor.

This sequence belongs to the Maf family. A divalent metal cation is required as a cofactor.

It is found in the cytoplasm. It carries out the reaction a ribonucleoside 5'-triphosphate + H2O = a ribonucleoside 5'-phosphate + diphosphate + H(+). The enzyme catalyses a 2'-deoxyribonucleoside 5'-triphosphate + H2O = a 2'-deoxyribonucleoside 5'-phosphate + diphosphate + H(+). Its function is as follows. Nucleoside triphosphate pyrophosphatase. May have a dual role in cell division arrest and in preventing the incorporation of modified nucleotides into cellular nucleic acids. The chain is Nucleoside triphosphate pyrophosphatase from Nitratiruptor sp. (strain SB155-2).